Consider the following 597-residue polypeptide: Nuclear factor erythroid 2-related factor 2 (597 aa).

The short motif at 29–31 (DLG) is the DLG motif element. S40 carries the post-translational modification Phosphoserine; by PKC. Residues 79 to 82 (ETGE) carry the ETGE motif motif. S207 bears the Phosphoserine mark. The segment at 327–440 (TMEFNDSDSG…APFTKDKHSS (114 aa)) is disordered. Residues 333-345 (SDSGISLNTSPSR) are compositionally biased toward polar residues. K454, K464, and K479 each carry an N-linked (Glc) (glycation) lysine glycan. In terms of domain architecture, bZIP spans 489–552 (LIRDIRRRGK…HLLKRRLSTL (64 aa)). An N-linked (Glc) (glycation) arginine glycan is attached at R491. The segment at 491–510 (RDIRRRGKNKVAAQNCRKRK) is basic motif. A leucine-zipper region spans residues 514–521 (IVELEQDL). R561 carries N-linked (Glc) (glycation) arginine glycosylation. The tract at residues 563-597 (EDGKPYSPSEYSLQQTRDGNVFLVPKSKKPDTKKN) is disordered. K566 carries an N-linked (Glc) (glycation) lysine glycan. Polar residues predominate over residues 571–580 (SEYSLQQTRD). Residues 583 to 588 (VFLVPK) are mediates interaction with CHD6 and is necessary to activate transcription. N6-acetyllysine; by CREBBP is present on residues K588 and K591.

This sequence belongs to the bZIP family. CNC subfamily. In terms of assembly, heterodimer; heterodimerizes with small Maf proteins. Interacts (via the bZIP domain) with MAFG and MAFK; required for binding to antioxidant response elements (AREs) on DNA. Interacts with KEAP1; the interaction is direct and promotes ubiquitination by the BCR(KEAP1) E3 ubiquitin ligase complex. Forms a ternary complex with PGAM5 and KEAP1. Interacts with EEF1D at heat shock promoter elements (HSE). Interacts via its leucine-zipper domain with the coiled-coil domain of PMF1. Interacts with CHD6; involved in activation of the transcription. Interacts with ESRRB; represses NFE2L2 transcriptional activity. Interacts with MOTS-c, a peptide produced by the mitochondrially encoded 12S rRNA MT-RNR1; the interaction occurs in the nucleus following metabolic stress. In terms of processing, ubiquitinated in the cytoplasm by the BCR(KEAP1) E3 ubiquitin ligase complex leading to its degradation. In response to oxidative stress, electrophile metabolites, such as sulforaphane, modify KEAP1, leading to inhibit activity of the BCR(KEAP1) complex, promoting NFE2L2/NRF2 nuclear accumulation and activity. In response to autophagy, the BCR(KEAP1) complex is inactivated. Phosphorylated by EIF2AK3/PERK following unfolded protein response (UPR), promoting dissociation from its cytoplasmic inhibitor KEAP1, followed by its translocation into the nucleus. Phosphorylation of Ser-40 by PKC in response to oxidative stress dissociates NFE2L2 from its cytoplasmic inhibitor KEAP1, promoting its translocation into the nucleus. Post-translationally, acetylation at Lys-588 and Lys-591 increases nuclear localization whereas deacetylation by SIRT1 enhances cytoplasmic presence. In terms of processing, glycation impairs transcription factor activity by preventing heterodimerization with small Maf proteins. Deglycation by FN3K restores activity. In terms of tissue distribution, widely expressed. Highest expression in liver, skeletal muscle, luminal cells of the stomach and intestine, lining of the bronchi and alveoli, and in renal tubules; followed by heart, spleen, testis and brain.

The protein localises to the cytoplasm. The protein resides in the cytosol. It localises to the nucleus. Its function is as follows. Transcription factor that plays a key role in the response to oxidative stress: binds to antioxidant response (ARE) elements present in the promoter region of many cytoprotective genes, such as phase 2 detoxifying enzymes, and promotes their expression, thereby neutralizing reactive electrophiles. In normal conditions, ubiquitinated and degraded in the cytoplasm by the BCR(KEAP1) complex. In response to oxidative stress, electrophile metabolites inhibit activity of the BCR(KEAP1) complex, promoting nuclear accumulation of NFE2L2/NRF2, heterodimerization with one of the small Maf proteins and binding to ARE elements of cytoprotective target genes. The NFE2L2/NRF2 pathway is also activated in response to selective autophagy: autophagy promotes interaction between KEAP1 and SQSTM1/p62 and subsequent inactivation of the BCR(KEAP1) complex, leading to NFE2L2/NRF2 nuclear accumulation and expression of cytoprotective genes. The NFE2L2/NRF2 pathway is also activated during the unfolded protein response (UPR), contributing to redox homeostasis and cell survival following endoplasmic reticulum stress. May also be involved in the transcriptional activation of genes of the beta-globin cluster by mediating enhancer activity of hypersensitive site 2 of the beta-globin locus control region. Also plays an important role in the regulation of the innate immune response. It is a critical regulator of the innate immune response and survival during sepsis by maintaining redox homeostasis and restraint of the dysregulation of pro-inflammatory signaling pathways like MyD88-dependent and -independent and TNF-alpha signaling. Suppresses macrophage inflammatory response by blocking pro-inflammatory cytokine transcription and the induction of IL6. Binds to the proximity of pro-inflammatory genes in macrophages and inhibits RNA Pol II recruitment. The inhibition is independent of the Nrf2-binding motif and reactive oxygen species level. Represses antiviral cytosolic DNA sensing by suppressing the expression of the adapter protein STING1 and decreasing responsiveness to STING1 agonists while increasing susceptibility to infection with DNA viruses. This chain is Nuclear factor erythroid 2-related factor 2, found in Mus musculus (Mouse).